The chain runs to 719 residues: Polyribonucleotide nucleotidyltransferase (719 aa).

2 residues coordinate Mg(2+): aspartate 507 and aspartate 513. In terms of domain architecture, KH spans 573–633; that stretch reads PKLELFSVDP…EQIKAAKDYI (61 aa). Residues 658–719 enclose the S1 motif domain; the sequence is GQEFQGIVKK…NGKISVDLCE (62 aa).

The protein belongs to the polyribonucleotide nucleotidyltransferase family. Mg(2+) serves as cofactor.

Its subcellular location is the cytoplasm. The enzyme catalyses RNA(n+1) + phosphate = RNA(n) + a ribonucleoside 5'-diphosphate. Functionally, involved in mRNA degradation. Catalyzes the phosphorolysis of single-stranded polyribonucleotides processively in the 3'- to 5'-direction. This chain is Polyribonucleotide nucleotidyltransferase, found in Campylobacter jejuni subsp. jejuni serotype O:2 (strain ATCC 700819 / NCTC 11168).